A 158-amino-acid chain; its full sequence is Globin CTT-I/CTT-IA (158 aa).

The signal sequence occupies residues 1 to 15 (MKFLILALCVAAAMA). In terms of domain architecture, Globin spans 16–158 (GPSGDQIAAA…FVFSTLKNEL (143 aa)). 2 residues coordinate heme b: His-74 and His-109.

This sequence belongs to the globin family. Monomer.

This chain is Globin CTT-I/CTT-IA (CTT-1), found in Chironomus thummi thummi (Midge).